The sequence spans 243 residues: Carboxy-S-adenosyl-L-methionine synthase (243 aa).

Residues Y40, 65–67, 90–91, 118–119, N133, and R200 each bind S-adenosyl-L-methionine; these read GCS, DN, and DI.

Belongs to the class I-like SAM-binding methyltransferase superfamily. Cx-SAM synthase family. In terms of assembly, homodimer.

It catalyses the reaction prephenate + S-adenosyl-L-methionine = carboxy-S-adenosyl-L-methionine + 3-phenylpyruvate + H2O. Catalyzes the conversion of S-adenosyl-L-methionine (SAM) to carboxy-S-adenosyl-L-methionine (Cx-SAM). This chain is Carboxy-S-adenosyl-L-methionine synthase, found in Shewanella putrefaciens (strain CN-32 / ATCC BAA-453).